The primary structure comprises 526 residues: Aspartate ammonia-lyase (526 aa).

Residues 1–44 (MSKTSNKSSADSKNDAKAEDIVNGENQIATNESQSSDSAAVSER) are disordered. Residues 10–20 (ADSKNDAKAED) are compositionally biased toward basic and acidic residues. Residues 24 to 39 (GENQIATNESQSSDSA) show a composition bias toward polar residues. L-aspartate contacts are provided by Thr155, Ser194, Thr195, Asn196, and Thr241. The SS loop stretch occupies residues 371–380 (GSSIMPAKVN). Ser372 serves as the catalytic Proton acceptor. Ser373 and Lys378 together coordinate L-aspartate.

The protein belongs to the class-II fumarase/aspartase family. Aspartase subfamily. Homotetramer.

It catalyses the reaction L-aspartate = fumarate + NH4(+). Functionally, catalyzes the reversible conversion of L-aspartate to fumarate and ammonia. This Corynebacterium glutamicum (strain ATCC 13032 / DSM 20300 / JCM 1318 / BCRC 11384 / CCUG 27702 / LMG 3730 / NBRC 12168 / NCIMB 10025 / NRRL B-2784 / 534) protein is Aspartate ammonia-lyase.